We begin with the raw amino-acid sequence, 510 residues long: Metalloprotease TIKI homolog (510 aa).

Positions 1–30 (MQVKIVQVFPCLVLLVKLVLLSVLLPSATG) are cleaved as a signal peptide. The Extracellular segment spans residues 31–489 (SYHCSNNATQ…FIPSASSGLR (459 aa)). 9 N-linked (GlcNAc...) asparagine glycosylation sites follow: Asn-37, Asn-98, Asn-108, Asn-141, Asn-223, Asn-281, Asn-322, Asn-383, and Asn-417. Residues 435–471 (TSLNSATASTTVATPTSSVTPPTSSSSQTRSLTISDS) are compositionally biased toward low complexity. The segment at 435–477 (TSLNSATASTTVATPTSSVTPPTSSSSQTRSLTISDSQRTSDD) is disordered. A helical membrane pass occupies residues 490–510 (YNIGLVCVTLFFVLLIITSAL).

The protein belongs to the TIKI family. Mn(2+) serves as cofactor. It depends on Co(2+) as a cofactor.

It localises to the membrane. Functionally, metalloprotease. The chain is Metalloprotease TIKI homolog from Amphimedon queenslandica (Sponge).